A 553-amino-acid polypeptide reads, in one-letter code: Formate--tetrahydrofolate ligase (553 aa).

Threonine 63–serine 70 is an ATP binding site.

It belongs to the formate--tetrahydrofolate ligase family.

The catalysed reaction is (6S)-5,6,7,8-tetrahydrofolate + formate + ATP = (6R)-10-formyltetrahydrofolate + ADP + phosphate. Its pathway is one-carbon metabolism; tetrahydrofolate interconversion. This Limosilactobacillus fermentum (strain NBRC 3956 / LMG 18251) (Lactobacillus fermentum) protein is Formate--tetrahydrofolate ligase.